The chain runs to 445 residues: Chromosomal replication initiator protein DnaA (445 aa).

Residues 1–73 (MSPNSTLWQT…NELATKYSST (73 aa)) form a domain I, interacts with DnaA modulators region. The segment at 73-102 (TPVRLKFVSQEEVIEEPVADRKLTIDYRQG) is domain II. The segment at 103-323 (NLNSTYTFDS…GALIRLISYA (221 aa)) is domain III, AAA+ region. ATP contacts are provided by Gly147, Gly149, Lys150, and Thr151. Positions 324–445 (QTFNLEITMN…KFAVDSIVKK (122 aa)) are domain IV, binds dsDNA.

This sequence belongs to the DnaA family. As to quaternary structure, oligomerizes as a right-handed, spiral filament on DNA at oriC.

It is found in the cytoplasm. Functionally, plays an essential role in the initiation and regulation of chromosomal replication. ATP-DnaA binds to the origin of replication (oriC) to initiate formation of the DNA replication initiation complex once per cell cycle. Binds the DnaA box (a 9 base pair repeat at the origin) and separates the double-stranded (ds)DNA. Forms a right-handed helical filament on oriC DNA; dsDNA binds to the exterior of the filament while single-stranded (ss)DNA is stabiized in the filament's interior. The ATP-DnaA-oriC complex binds and stabilizes one strand of the AT-rich DNA unwinding element (DUE), permitting loading of DNA polymerase. After initiation quickly degrades to an ADP-DnaA complex that is not apt for DNA replication. Binds acidic phospholipids. The protein is Chromosomal replication initiator protein DnaA of Acholeplasma laidlawii.